Consider the following 333-residue polypeptide: Mitochondrial glycine transporter (333 aa).

3 Solcar repeats span residues 10-93, 125-209, and 235-319; these read SKST…IRQS, LSNT…GKKR, and HAAS…LIRR. 2 helical membrane passes run 16-41 and 68-94; these read FAAG…TRVQ and GAVP…RQSA. The interval 98 to 126 is disordered; the sequence is SPLPSSSSSTTTSSSTTTSSSSSSLPKLS. A run of 4 helical transmembrane segments spans residues 131 to 156, 184 to 207, 239 to 265, and 294 to 312; these read LLAG…VRYE, GYGA…EQGK, INFA…KTRI, and GLAL…AWTV.

This sequence belongs to the mitochondrial carrier (TC 2.A.29) family. SLC25A38 subfamily.

The protein resides in the mitochondrion inner membrane. It catalyses the reaction glycine(in) = glycine(out). Functionally, mitochondrial glycine transporter that imports glycine into the mitochondrial matrix. Plays an important role in providing glycine for the first enzymatic step in heme biosynthesis, the condensation of glycine with succinyl-CoA to produce 5-aminolevulinate (ALA) in the mitochondrial matrix. The polypeptide is Mitochondrial glycine transporter (Chaetomium globosum (strain ATCC 6205 / CBS 148.51 / DSM 1962 / NBRC 6347 / NRRL 1970) (Soil fungus)).